We begin with the raw amino-acid sequence, 701 residues long: Elongation factor G 1 (701 aa).

The tr-type G domain occupies 5–281; sequence SKYRNIGIFA…AVVDYLPSPT (277 aa). GTP contacts are provided by residues 14–21, 78–82, and 132–135; these read AHVDAGKT, DTPGH, and NKLD.

It belongs to the TRAFAC class translation factor GTPase superfamily. Classic translation factor GTPase family. EF-G/EF-2 subfamily.

The protein localises to the cytoplasm. In terms of biological role, catalyzes the GTP-dependent ribosomal translocation step during translation elongation. During this step, the ribosome changes from the pre-translocational (PRE) to the post-translocational (POST) state as the newly formed A-site-bound peptidyl-tRNA and P-site-bound deacylated tRNA move to the P and E sites, respectively. Catalyzes the coordinated movement of the two tRNA molecules, the mRNA and conformational changes in the ribosome. The polypeptide is Elongation factor G 1 (Colwellia psychrerythraea (strain 34H / ATCC BAA-681) (Vibrio psychroerythus)).